A 56-amino-acid polypeptide reads, in one-letter code: Large ribosomal subunit protein eL37 (56 aa).

Cys19, Cys22, Cys34, and Cys37 together coordinate Zn(2+). Residues 19-37 (CRRCGSVSLNVHTKQCTSC) form a C4-type zinc finger.

It belongs to the eukaryotic ribosomal protein eL37 family. Requires Zn(2+) as cofactor.

In terms of biological role, binds to the 23S rRNA. This is Large ribosomal subunit protein eL37 from Methanosarcina mazei (strain ATCC BAA-159 / DSM 3647 / Goe1 / Go1 / JCM 11833 / OCM 88) (Methanosarcina frisia).